A 185-amino-acid chain; its full sequence is Endoribonuclease YbeY (185 aa).

3 residues coordinate Zn(2+): His-135, His-139, and His-145.

It belongs to the endoribonuclease YbeY family. It depends on Zn(2+) as a cofactor.

The protein resides in the cytoplasm. In terms of biological role, single strand-specific metallo-endoribonuclease involved in late-stage 70S ribosome quality control and in maturation of the 3' terminus of the 16S rRNA. This Parasynechococcus marenigrum (strain WH8102) protein is Endoribonuclease YbeY.